The chain runs to 209 residues: Dual specificity phosphatase 29 (209 aa).

In terms of domain architecture, Tyrosine-protein phosphatase spans 45–193 (HVNEVWPNLY…LRELDIKLAL (149 aa)). 137–144 (NCAMGRSR) serves as a coordination point for substrate. Cysteine 138 functions as the Phosphocysteine intermediate in the catalytic mechanism.

The protein belongs to the protein-tyrosine phosphatase family. Non-receptor class dual specificity subfamily.

It localises to the cytoplasm. The protein resides in the nucleus. The catalysed reaction is O-phospho-L-tyrosyl-[protein] + H2O = L-tyrosyl-[protein] + phosphate. It carries out the reaction O-phospho-L-seryl-[protein] + H2O = L-seryl-[protein] + phosphate. It catalyses the reaction O-phospho-L-threonyl-[protein] + H2O = L-threonyl-[protein] + phosphate. Its function is as follows. Dual specificity phosphatase able to dephosphorylate phosphotyrosine, phosphoserine and phosphothreonine residues, with a preference for phosphotyrosine as a substrate. Dual specificity phosphatase able to dephosphorylate phosphotyrosine, phosphoserine and phosphothreonine residues within the same substrate, with a preference for phosphotyrosine as a substrate. Involved in the modulation of AMPK and MAPK1/2 signaling pathway. This is Dual specificity phosphatase 29 (dusp29) from Xenopus laevis (African clawed frog).